Reading from the N-terminus, the 122-residue chain is Large ribosomal subunit protein uL14 (122 aa).

Belongs to the universal ribosomal protein uL14 family. Part of the 50S ribosomal subunit. Forms a cluster with proteins L3 and L19. In the 70S ribosome, L14 and L19 interact and together make contacts with the 16S rRNA in bridges B5 and B8.

Binds to 23S rRNA. Forms part of two intersubunit bridges in the 70S ribosome. This is Large ribosomal subunit protein uL14 from Nostoc punctiforme (strain ATCC 29133 / PCC 73102).